Consider the following 306-residue polypeptide: Serine/threonine-protein phosphatase PP2A-1 catalytic subunit (306 aa).

The Mn(2+) site is built by D54, H56, D82, and N114. The active-site Proton donor is the H115. Residues H164 and H238 each coordinate Mn(2+).

It belongs to the PPP phosphatase family. PP-2A subfamily. It depends on Mn(2+) as a cofactor.

It is found in the cytoplasm. The enzyme catalyses O-phospho-L-seryl-[protein] + H2O = L-seryl-[protein] + phosphate. It catalyses the reaction O-phospho-L-threonyl-[protein] + H2O = L-threonyl-[protein] + phosphate. The protein is Serine/threonine-protein phosphatase PP2A-1 catalytic subunit (PP2A1) of Oryza sativa subsp. indica (Rice).